A 255-amino-acid chain; its full sequence is tRNA (guanine-N(7)-)-methyltransferase (255 aa).

The tract at residues 1–29 is disordered; that stretch reads MMHDDPNEAGLPPDDAALPDEAADGADEV. Residues 17-27 are compositionally biased toward acidic residues; sequence ALPDEAADGAD. The S-adenosyl-L-methionine site is built by Glu86, Glu111, Asp138, and Asp161. Asp161 is a catalytic residue. Substrate-binding positions include Lys165, Asp197, and 232–235; that span reads TKFE.

This sequence belongs to the class I-like SAM-binding methyltransferase superfamily. TrmB family.

It catalyses the reaction guanosine(46) in tRNA + S-adenosyl-L-methionine = N(7)-methylguanosine(46) in tRNA + S-adenosyl-L-homocysteine. It participates in tRNA modification; N(7)-methylguanine-tRNA biosynthesis. Its function is as follows. Catalyzes the formation of N(7)-methylguanine at position 46 (m7G46) in tRNA. The polypeptide is tRNA (guanine-N(7)-)-methyltransferase (Burkholderia ambifaria (strain ATCC BAA-244 / DSM 16087 / CCUG 44356 / LMG 19182 / AMMD) (Burkholderia cepacia (strain AMMD))).